The following is a 162-amino-acid chain: Class I hydrophobin dewC (162 aa).

An N-terminal signal peptide occupies residues methionine 1–alanine 21. 4 cysteine pairs are disulfide-bonded: cysteine 43-cysteine 119, cysteine 50-cysteine 113, cysteine 51-cysteine 90, and cysteine 120-cysteine 156.

Belongs to the fungal hydrophobin family. In terms of assembly, self-assembles to form functional amyloid fibrils called rodlets. Self-assembly into fibrillar rodlets occurs spontaneously at hydrophobic:hydrophilic interfaces and the rodlets further associate laterally to form amphipathic monolayers.

The protein resides in the secreted. Its subcellular location is the spore wall. In terms of biological role, aerial growth, conidiation, and dispersal of filamentous fungi in the environment rely upon a capability of their secreting small amphipathic proteins called hydrophobins (HPBs) with low sequence identity. Class I can self-assemble into an outermost layer of rodlet bundles on aerial cell surfaces, conferring cellular hydrophobicity that supports fungal growth, development and dispersal; whereas Class II form highly ordered films at water-air interfaces through intermolecular interactions but contribute nothing to the rodlet structure. DewC is a class I hydrophobin that contributes to the hydrophobicity of the spore surface. The protein is Class I hydrophobin dewC of Emericella nidulans (strain FGSC A4 / ATCC 38163 / CBS 112.46 / NRRL 194 / M139) (Aspergillus nidulans).